Reading from the N-terminus, the 314-residue chain is Glutathione synthetase (314 aa).

An ATP-grasp domain is found at 125–311; the sequence is EKLAAQLFPQ…IAGQLFDAIE (187 aa). Position 151–208 (151–208) interacts with ATP; that stretch reads FVQKQEQAILKPLDGMGGHSIFRSSNGDPNLNVILETLTDGGRTLAIAQRYLQQIIEG. Mg(2+) is bound by residues Glu-282 and Asn-284.

This sequence belongs to the prokaryotic GSH synthase family. It depends on Mg(2+) as a cofactor. Mn(2+) serves as cofactor.

It catalyses the reaction gamma-L-glutamyl-L-cysteine + glycine + ATP = glutathione + ADP + phosphate + H(+). The protein operates within sulfur metabolism; glutathione biosynthesis; glutathione from L-cysteine and L-glutamate: step 2/2. This is Glutathione synthetase from Xylella fastidiosa (strain 9a5c).